The primary structure comprises 343 residues: E3 ubiquitin-protein ligase RNF113A (343 aa).

Ala2 bears the N-acetylalanine mark. Residues Ala2–Arg60 are important for interaction with SNRNP200/BRR2. Ser6 is subject to Phosphoserine. Over residues Pro22–Arg33 the composition is skewed to basic residues. The disordered stretch occupies residues Pro22–Leu96. The segment covering Gly41–Gly50 has biased composition (low complexity). Residues Gly50 to Val61 form an important for interaction with CXCR4 region. A phosphoserine mark is found at Ser84 and Ser85. Positions Ser84–Pro93 are enriched in acidic residues. A C3H1-type zinc finger spans residues Asp196 to Ser224. Ser253 bears the Phosphoserine mark. The RING-type zinc finger occupies Cys262–Asp300. A disordered region spans residues Ala322–Thr343. Residues Leu331–Thr343 show a composition bias toward acidic residues.

In terms of assembly, component of pre-catalytic and catalytic spliceosome complexes. Interacts (via N-terminus) with the spliceosome subunit SNRNP200/BRR2. Component of the minor spliceosome, which splices U12-type introns. Within this complex, interacts with SCNM1 and CRIPT. As to expression, ubiquitous.

The protein resides in the nucleus. The protein localises to the nucleus speckle. The catalysed reaction is S-ubiquitinyl-[E2 ubiquitin-conjugating enzyme]-L-cysteine + [acceptor protein]-L-lysine = [E2 ubiquitin-conjugating enzyme]-L-cysteine + N(6)-ubiquitinyl-[acceptor protein]-L-lysine.. The protein operates within protein modification; protein ubiquitination. Its function is as follows. Required for pre-mRNA splicing as component of the spliceosome. As a component of the minor spliceosome, involved in the splicing of U12-type introns in pre-mRNAs. E3 ubiquitin-protein ligase that catalyzes the transfer of ubiquitin onto target proteins. Catalyzes polyubiquitination of SNRNP200/BRR2 with non-canonical 'Lys-63'-linked polyubiquitin chains. Plays a role in DNA repair via its role in the synthesis of 'Lys-63'-linked polyubiquitin chains that recruit ALKBH3 and the ASCC complex to sites of DNA damage by alkylating agents. Ubiquitinates CXCR4, leading to its degradation, and thereby contributes to the termination of CXCR4 signaling. This Homo sapiens (Human) protein is E3 ubiquitin-protein ligase RNF113A (RNF113A).